A 353-amino-acid polypeptide reads, in one-letter code: uncharacterized protein (353 aa).

An N-terminal signal peptide occupies residues 1-30 (MHLRHLFSPRLRGSLLLGSLLVASSFSTLA).

This is an uncharacterized protein from Salmonella typhimurium (strain LT2 / SGSC1412 / ATCC 700720).